Here is a 445-residue protein sequence, read N- to C-terminus: Methionine aminopeptidase 2 (445 aa).

The tract at residues 1 to 80 (MAAQVASGVG…TSKVQTEPPR (80 aa)) is disordered. Positions 57-71 (AKKKKKKTKKKKKGT) are enriched in basic residues. His-195 is a binding site for substrate. Residues Asp-215, Asp-226, and His-295 each coordinate a divalent metal cation. His-303 contributes to the substrate binding site. Residues Glu-331 and Glu-426 each contribute to the a divalent metal cation site.

It belongs to the peptidase M24A family. Methionine aminopeptidase eukaryotic type 2 subfamily. Requires Co(2+) as cofactor. The cofactor is Zn(2+). Mn(2+) serves as cofactor. Fe(2+) is required as a cofactor.

The protein localises to the cytoplasm. The catalysed reaction is Release of N-terminal amino acids, preferentially methionine, from peptides and arylamides.. Its function is as follows. Cotranslationally removes the N-terminal methionine from nascent proteins. The N-terminal methionine is often cleaved when the second residue in the primary sequence is small and uncharged (Met-Ala-, Cys, Gly, Pro, Ser, Thr, or Val). This Paracoccidioides brasiliensis (strain Pb18) protein is Methionine aminopeptidase 2.